Reading from the N-terminus, the 325-residue chain is MARKKISVIGAGNVGATVAQFLAAKQLGDVYLFDVVDGIPEGKALDIQEGAPHWRYDLDVVGFSTSDETKYKNMEGSDVIVVTAGLARKPGMSRDDLFDKNVEIISDVSRNIKKYSPDSIIVVVSNPADIMAYALQKFTGIDPSKIMGLGGSLDSSRFRTFLAKELNVSVEDVNAFVIGGHGDDMVPFIRYSSVAGIPIENLLSKEKIDEIVKRTRFGGGEIVNYLKTGSAFYAPGISITAMVESVIMDKKRVIPCAAYITGKHADHYGIRDKFIGVPIKIGEKGVEQIYDIDFKPDELELWKKSVASVEASSKKVDEWIAKHAH.

NAD(+) is bound by residues 10–15 and Asp34; that span reads GAGNVG. Residues Arg88 and Arg94 each contribute to the substrate site. NAD(+) contacts are provided by residues Asn101 and 124–126; that span reads VSN. 2 residues coordinate substrate: Asn126 and Arg157. Residue His181 is the Proton acceptor of the active site.

It belongs to the LDH/MDH superfamily.

It carries out the reaction (S)-malate + NAD(+) = oxaloacetate + NADH + H(+). Its function is as follows. Catalyzes the reversible oxidation of malate to oxaloacetate. This Thermoplasma acidophilum (strain ATCC 25905 / DSM 1728 / JCM 9062 / NBRC 15155 / AMRC-C165) protein is Malate dehydrogenase (mdh).